We begin with the raw amino-acid sequence, 350 residues long: Ferredoxin--NADP reductase (350 aa).

Positions 14, 33, 41, 46, 86, 121, 286, and 327 each coordinate FAD.

This sequence belongs to the ferredoxin--NADP reductase type 2 family. Homodimer. It depends on FAD as a cofactor.

It catalyses the reaction 2 reduced [2Fe-2S]-[ferredoxin] + NADP(+) + H(+) = 2 oxidized [2Fe-2S]-[ferredoxin] + NADPH. This is Ferredoxin--NADP reductase from Flavobacterium johnsoniae (strain ATCC 17061 / DSM 2064 / JCM 8514 / BCRC 14874 / CCUG 350202 / NBRC 14942 / NCIMB 11054 / UW101) (Cytophaga johnsonae).